The sequence spans 89 residues: Small ribosomal subunit protein uS15 (89 aa).

The protein belongs to the universal ribosomal protein uS15 family. In terms of assembly, part of the 30S ribosomal subunit. Forms a bridge to the 50S subunit in the 70S ribosome, contacting the 23S rRNA.

One of the primary rRNA binding proteins, it binds directly to 16S rRNA where it helps nucleate assembly of the platform of the 30S subunit by binding and bridging several RNA helices of the 16S rRNA. Functionally, forms an intersubunit bridge (bridge B4) with the 23S rRNA of the 50S subunit in the ribosome. The chain is Small ribosomal subunit protein uS15 from Latilactobacillus sakei subsp. sakei (strain 23K) (Lactobacillus sakei subsp. sakei).